The primary structure comprises 177 residues: Interleukin-25 (177 aa).

A signal peptide spans 1 to 32 (MRERPRLGEDSSLISLFLQVVAFLAMVMGTHT). Residues 58–81 (PVPPLEPARPNRHPESCRASEDGP) are disordered. Positions 69-78 (RHPESCRASE) are enriched in basic and acidic residues. Intrachain disulfides connect Cys-110–Cys-168 and Cys-115–Cys-170. N-linked (GlcNAc...) asparagine glycosylation is present at Asn-136.

This sequence belongs to the IL-17 family. In terms of tissue distribution, expressed at low levels in several tissues, including brain, kidney, lung, prostate, testis, spinal cord, adrenal gland, and trachea.

The protein localises to the secreted. Cytokine produced by various cells such as eosinophils, T-helper type 2 (Th2) cells or epithelial cells that plays a role in internal safety of adaptive immune responses by regulating cytokine production. Promotes and augments T-helper type 2 responses locally or systemically. Exerts its activity via its receptor composed of IL17RA and IL17RB for signal transduction. In turn, stimulates the JAK2-STAT5A pathway and promotes the secretion of type-2 associated cytokines including IL4, IL9 and IL13. Also induces the release of IL8, and IL6 from eosinophils through the combined activation of MAPK and NF-kappa-B pathways. Inhibits the differentiation of T-helper (Th17) cells via the production of IL4, IL5 and IL13. The polypeptide is Interleukin-25 (IL25) (Homo sapiens (Human)).